A 913-amino-acid chain; its full sequence is Tyrosine-protein phosphatase non-receptor type 3 (913 aa).

Positions 29–312 constitute an FERM domain; the sequence is VICSIRFLDG…EHHSFFQAKK (284 aa). Phosphoserine occurs at positions 357, 359, and 367. Disordered regions lie at residues 364–400 and 417–473; these read ETKS…DNLA and KGPL…PDGV. Position 376 is a phosphothreonine (Thr-376). The residue at position 381 (Ser-381) is a Phosphoserine. The span at 382–393 shows a compositional bias: basic residues; that stretch reads PRLRHEIRKPRH. Phosphoserine is present on Ser-425. A compositionally biased stretch (polar residues) spans 441–453; it reads SENNPAQSCLTQK. The span at 454–470 shows a compositional bias: low complexity; it reads SSSSVSPSSNAPGSCSP. Positions 510 to 582 constitute a PDZ domain; the sequence is LIRITPDEEG…DQVVMFIKAS (73 aa). Residues 646 to 901 enclose the Tyrosine-protein phosphatase domain; the sequence is VLIQFEQLYR…KFVCEAILRV (256 aa). Substrate is bound by residues Asp-811, 842-848, and Gln-886; that span reads CSAGIGR. Cys-842 functions as the Phosphocysteine intermediate in the catalytic mechanism.

Belongs to the protein-tyrosine phosphatase family. Non-receptor class subfamily.

It localises to the cell membrane. It is found in the cytoplasm. The protein localises to the cytoskeleton. It carries out the reaction O-phospho-L-tyrosyl-[protein] + H2O = L-tyrosyl-[protein] + phosphate. May act at junctions between the membrane and the cytoskeleton. This is Tyrosine-protein phosphatase non-receptor type 3 (Ptpn3) from Mus musculus (Mouse).